An 875-amino-acid polypeptide reads, in one-letter code: Valine--tRNA ligase (875 aa).

The 'HIGH' region signature appears at 43-53; sequence PNVTGVLHMGH. A 'KMSKS' region motif is present at residues 534-538; sequence KMSKS. Lys-537 provides a ligand contact to ATP. Residues 805–875 are a coiled coil; that stretch reads GNLINTEEEL…LKESIAALKK (71 aa).

This sequence belongs to the class-I aminoacyl-tRNA synthetase family. ValS type 1 subfamily. As to quaternary structure, monomer.

The protein resides in the cytoplasm. It carries out the reaction tRNA(Val) + L-valine + ATP = L-valyl-tRNA(Val) + AMP + diphosphate. Catalyzes the attachment of valine to tRNA(Val). As ValRS can inadvertently accommodate and process structurally similar amino acids such as threonine, to avoid such errors, it has a 'posttransfer' editing activity that hydrolyzes mischarged Thr-tRNA(Val) in a tRNA-dependent manner. This Phocaeicola vulgatus (strain ATCC 8482 / DSM 1447 / JCM 5826 / CCUG 4940 / NBRC 14291 / NCTC 11154) (Bacteroides vulgatus) protein is Valine--tRNA ligase.